The sequence spans 153 residues: ORM1-like protein 1 (153 aa).

The Cytoplasmic portion of the chain corresponds to 1–26 (MNVGVAHSEVNPNTRVMNSRGMWLTY). The next 2 helical transmembrane spans lie at 27–46 (ALGVGLLHIVLLSIPFFSVP) and 47–64 (VAWTLTNVIHNLGMYVFL). The Cytoplasmic segment spans residues 65 to 100 (HAVKGTPFETPDQGKARLLTHWEQLDYGVQFTSSRK). The chain crosses the membrane as a helical span at residues 101-121 (FFTISPIILYFLASFYTKYDT). Residues 122–123 (TH) lie on the Extracellular side of the membrane. The helical transmembrane segment at 124-140 (FILNTASLLSVLIPKMP) threads the bilayer. Over 141–153 (QLHGVRIFGINKY) the chain is Cytoplasmic.

This sequence belongs to the ORM family. Ceramide-sensitive subunit of the serine palmitoyltransferase (SPT) complex, which is also composed of SPTLC1, SPTLC2/3 and SPTSSA/B.

It is found in the endoplasmic reticulum membrane. In terms of biological role, plays an essential role in the homeostatic regulation of sphingolipid de novo biosynthesis by modulating the activity of the serine palmitoyltransferase (SPT) in response to ceramide levels. When complexed to SPT, the binding of ceramides to its N-terminus stabilizes a conformation that block SPT substrate entry, hence preventing SPT catalytic activity. Through this mechanism, maintains ceramide levels at sufficient concentrations for the production of complex sphingolipids, but which prevents the accumulation of ceramides to levels that trigger apoptosis. The sequence is that of ORM1-like protein 1 (ORMDL1) from Bos taurus (Bovine).